The primary structure comprises 311 residues: MSKILVFGHQNPDTDAIASSYAFDYLSQKAFGLDTEVVALGTPNEETAFALDYFGVEAPRVVESAKAQGSEQVILTDHNEFQQSIADIREVEVYGVVDHHRVANFETANPLYMRVEPVGSASSIVYRMFKENGIEVPKAIAGMLLSGLISDTLLLKSPTTHVSDHLVAEELAELAEVNLEDYGMALLKAGTNLASKSEVELIGIDAKTFELNGNAVRVAQVNTVDIAEVLERQEAIEAAIKDAMAAEGYSDFVLMITDIVNSNSEILAIGANMDKVEAAFNFTLDNNHAFLAGAVSRKKQVVPQLTESFGA.

Mn(2+) is bound by residues His9, Asp13, Asp15, Asp77, His99, and Asp151.

It belongs to the PPase class C family. It depends on Mn(2+) as a cofactor.

It is found in the cytoplasm. It catalyses the reaction diphosphate + H2O = 2 phosphate + H(+). The protein is Probable manganese-dependent inorganic pyrophosphatase of Streptococcus pyogenes serotype M1.